The following is a 451-amino-acid chain: Trigger factor (451 aa).

The PPIase FKBP-type domain maps to 173 to 258 (GDRVTLDFVG…LKKIEWAHLP (86 aa)).

It belongs to the FKBP-type PPIase family. Tig subfamily.

It localises to the cytoplasm. It catalyses the reaction [protein]-peptidylproline (omega=180) = [protein]-peptidylproline (omega=0). In terms of biological role, involved in protein export. Acts as a chaperone by maintaining the newly synthesized protein in an open conformation. Functions as a peptidyl-prolyl cis-trans isomerase. The polypeptide is Trigger factor (Cupriavidus necator (strain ATCC 17699 / DSM 428 / KCTC 22496 / NCIMB 10442 / H16 / Stanier 337) (Ralstonia eutropha)).